The chain runs to 271 residues: ATP synthase subunit delta (271 aa).

Belongs to the ATPase delta chain family. In terms of assembly, F-type ATPases have 2 components, F(1) - the catalytic core - and F(0) - the membrane proton channel. F(1) has five subunits: alpha(3), beta(3), gamma(1), delta(1), epsilon(1). F(0) has three main subunits: a(1), b(2) and c(10-14). The alpha and beta chains form an alternating ring which encloses part of the gamma chain. F(1) is attached to F(0) by a central stalk formed by the gamma and epsilon chains, while a peripheral stalk is formed by the delta and b chains.

The protein localises to the cell membrane. Its function is as follows. F(1)F(0) ATP synthase produces ATP from ADP in the presence of a proton or sodium gradient. F-type ATPases consist of two structural domains, F(1) containing the extramembraneous catalytic core and F(0) containing the membrane proton channel, linked together by a central stalk and a peripheral stalk. During catalysis, ATP synthesis in the catalytic domain of F(1) is coupled via a rotary mechanism of the central stalk subunits to proton translocation. In terms of biological role, this protein is part of the stalk that links CF(0) to CF(1). It either transmits conformational changes from CF(0) to CF(1) or is implicated in proton conduction. This chain is ATP synthase subunit delta, found in Renibacterium salmoninarum (strain ATCC 33209 / DSM 20767 / JCM 11484 / NBRC 15589 / NCIMB 2235).